We begin with the raw amino-acid sequence, 552 residues long: Probable inorganic phosphate transporter 1-10 (552 aa).

Over 1-22 (MAPIGVLTALDQARTQYYHFKA) the chain is Cytoplasmic. Residues 23 to 43 (IVIAGMGLFTDSYDLFCIAPV) traverse the membrane as a helical segment. Residues 44 to 68 (MKIVGRVYYSDGGARPGVTPPAVVS) lie on the Extracellular side of the membrane. The helical transmembrane segment at 69–89 (ATVGVALLGAVIGNVVFGALG) threads the bilayer. Topologically, residues 90 to 96 (DRVGRRR) are cytoplasmic. Residues 97 to 117 (VYGACLLLMVCSSVGSGFSVC) traverse the membrane as a helical segment. At 118 to 123 (RTRRCA) the chain is on the extracellular side. The helical transmembrane segment at 124-144 (LASLCFFRFLLGVGVGGDYPL) threads the bilayer. The Cytoplasmic segment spans residues 145–158 (SATIMSEFANRRTR). The chain crosses the membrane as a helical span at residues 159–179 (GAFIAAVFSMQGFGILASSAV). Residues 180 to 203 (TMAVAAAFDHYTGYPAPLDTPECA) are Extracellular-facing. A helical transmembrane segment spans residues 204 to 224 (DLAWRIILMAGAVPAALTYYW). Residues 225 to 295 (RMSMPETARY…RRFVRQHGRD (71 aa)) are Cytoplasmic-facing. The helical transmembrane segment at 296–316 (LFACAAAWFLLDIPYYSSTLF) threads the bilayer. Residues 317–342 (QSQIYRPLFPAPGLINAFQEAFNVAK) are Extracellular-facing. The helical transmembrane segment at 343–363 (FQAVIAVASTIPGYFVAVLLI) threads the bilayer. At 364–369 (DRVGRR) the chain is on the cytoplasmic side. A helical membrane pass occupies residues 370–390 (CLQMAGFLLMAVFLFALAGPY). Residues 391 to 397 (DGYWRDH) are Extracellular-facing. The chain crosses the membrane as a helical span at residues 398–418 (GAHAGYIVLYSLTFFSANLGP). Residues 419–439 (NTTTFILPAELFPARFRSTCH) lie on the Cytoplasmic side of the membrane. Residues 440–460 (GLSGAAGKLGALVGSIGFLWA) form a helical membrane-spanning segment. At 461-473 (SQQKDGAAAGHLP) the chain is on the extracellular side. Residues 474–494 (GIGMMYALFVLGGICLLGLAL) form a helical membrane-spanning segment. The Cytoplasmic segment spans residues 495-552 (TYVFTPETMMRSLEENESDRAQTQVGDGGSDTEAAKSPASMASSHLSMSPILPARVSV). A disordered region spans residues 507-540 (LEENESDRAQTQVGDGGSDTEAAKSPASMASSHL).

Belongs to the major facilitator superfamily. Phosphate:H(+) symporter (TC 2.A.1.9) family. Expressed at low levels in roots.

It localises to the membrane. High-affinity transporter for external inorganic phosphate. This is Probable inorganic phosphate transporter 1-10 (PHT1-10) from Oryza sativa subsp. japonica (Rice).